The chain runs to 347 residues: tRNA(Ile)-lysidine synthase (347 aa).

27–32 (SGGADS) contacts ATP. Residues 243 to 263 (AAPASPSHVEGEASAPHDAAH) form a disordered region.

It belongs to the tRNA(Ile)-lysidine synthase family.

Its subcellular location is the cytoplasm. The catalysed reaction is cytidine(34) in tRNA(Ile2) + L-lysine + ATP = lysidine(34) in tRNA(Ile2) + AMP + diphosphate + H(+). Ligates lysine onto the cytidine present at position 34 of the AUA codon-specific tRNA(Ile) that contains the anticodon CAU, in an ATP-dependent manner. Cytidine is converted to lysidine, thus changing the amino acid specificity of the tRNA from methionine to isoleucine. This Nitratidesulfovibrio vulgaris (strain ATCC 29579 / DSM 644 / CCUG 34227 / NCIMB 8303 / VKM B-1760 / Hildenborough) (Desulfovibrio vulgaris) protein is tRNA(Ile)-lysidine synthase.